A 261-amino-acid chain; its full sequence is Sulfur carrier protein FdhD (261 aa).

Catalysis depends on Cys105, which acts as the Cysteine persulfide intermediate. Phe245–Arg250 contacts Mo-bis(molybdopterin guanine dinucleotide).

It belongs to the FdhD family.

The protein localises to the cytoplasm. Required for formate dehydrogenase (FDH) activity. Acts as a sulfur carrier protein that transfers sulfur from IscS to the molybdenum cofactor prior to its insertion into FDH. This is Sulfur carrier protein FdhD from Listeria monocytogenes serotype 4b (strain F2365).